Reading from the N-terminus, the 881-residue chain is Putative leucine-rich repeat receptor-like protein kinase At2g19210 (881 aa).

The first 25 residues, Met-1–Ala-25, serve as a signal peptide directing secretion. Residues Gln-26–Tyr-518 lie on the Extracellular side of the membrane. Residues Asn-143, Asn-234, Asn-295, Asn-310, Asn-404, Asn-419, Asn-435, Asn-446, and Asn-462 are each glycosylated (N-linked (GlcNAc...) asparagine). 2 LRR repeats span residues Leu-438–Leu-460 and Asn-462–Glu-483. Residues Ile-519 to Phe-539 form a helical membrane-spanning segment. Residues Leu-540 to Arg-881 are Cytoplasmic-facing. Residues Asn-576–Val-850 enclose the Protein kinase domain. ATP is bound by residues Leu-582–Val-590 and Lys-603. The residue at position 648 (Tyr-648) is a Phosphotyrosine. Asp-699 (proton acceptor) is an active-site residue. A phosphothreonine mark is found at Thr-734 and Thr-739. Tyr-747 carries the post-translational modification Phosphotyrosine. Positions Ser-851–Arg-881 are disordered.

The protein belongs to the protein kinase superfamily. Ser/Thr protein kinase family.

It is found in the cell membrane. The enzyme catalyses L-seryl-[protein] + ATP = O-phospho-L-seryl-[protein] + ADP + H(+). It catalyses the reaction L-threonyl-[protein] + ATP = O-phospho-L-threonyl-[protein] + ADP + H(+). The protein is Putative leucine-rich repeat receptor-like protein kinase At2g19210 of Arabidopsis thaliana (Mouse-ear cress).